The primary structure comprises 211 residues: MPHLLHVDSSLATESSTSRSIATIFAEAWREAHPDGIITYRDLSVTPPPHLDWATVSARFTPPEQLSAEQAEAVKKGEELIAEVEAADEYLLSVPMYNYAVPSTFKAWIDQIIVMGRTVRQAPDDSALTGKKVTVVTAQGGSYGPGTPKEGWDHQQPYVAHILAALGATDIEFIRVEMTLAPVNPALAEFIDLFQRSKAEAAAAARLRASV.

FMN is bound by residues serine 10 and 16-18 (STS).

Belongs to the azoreductase type 1 family. In terms of assembly, homodimer. Requires FMN as cofactor.

It catalyses the reaction 2 a quinone + NADH + H(+) = 2 a 1,4-benzosemiquinone + NAD(+). It carries out the reaction N,N-dimethyl-1,4-phenylenediamine + anthranilate + 2 NAD(+) = 2-(4-dimethylaminophenyl)diazenylbenzoate + 2 NADH + 2 H(+). In terms of biological role, quinone reductase that provides resistance to thiol-specific stress caused by electrophilic quinones. Its function is as follows. Also exhibits azoreductase activity. Catalyzes the reductive cleavage of the azo bond in aromatic azo compounds to the corresponding amines. The sequence is that of FMN-dependent NADH:quinone oxidoreductase from Frankia casuarinae (strain DSM 45818 / CECT 9043 / HFP020203 / CcI3).